The following is a 367-amino-acid chain: Mitogen-activated protein kinase 12 (367 aa).

Residues 27 to 311 (YQDLQPVGSG…AAEALTHPYF (285 aa)) enclose the Protein kinase domain. Residues 33–41 (VGSGAYGAV) and Lys56 each bind ATP. Asp153 acts as the Proton acceptor in catalysis. Thr183 carries the post-translational modification Phosphothreonine. The TXY motif lies at 183 to 185 (TGY). At Tyr185 the chain carries Phosphotyrosine.

It belongs to the protein kinase superfamily. CMGC Ser/Thr protein kinase family. MAP kinase subfamily. Monomer. Interacts with the PDZ domain of the syntrophin SNTA1. Interacts with SH3BP5, LIN7C, SCRIB and SYNJ2BP. Interacts with PTPN4; this interaction induces the activation of PTPN4 phosphatase activity. The cofactor is Mg(2+). In terms of processing, dually phosphorylated on Thr-183 and Tyr-185 by MAP2K3/MKK3 and MAP2K6/MKK6, which activates the enzyme. Ubiquitinated. Ubiquitination leads to degradation by the proteasome pathway. As to expression, highly expressed in skeletal muscle. Also expressed in the heart, particularly in cardiac myocytes, lung, thymus and testes.

The protein resides in the cytoplasm. The protein localises to the nucleus. It localises to the mitochondrion. The enzyme catalyses L-seryl-[protein] + ATP = O-phospho-L-seryl-[protein] + ADP + H(+). It catalyses the reaction L-threonyl-[protein] + ATP = O-phospho-L-threonyl-[protein] + ADP + H(+). Its activity is regulated as follows. Activated by phosphorylation on threonine and tyrosine. MAP2K3/MKK3 and MAP2K6/MKK6 are both essential for the activation of MAPK12 induced by environmental stress, whereas MAP2K6/MKK6 is the major MAPK12 activator in response to TNF-alpha. Its function is as follows. Serine/threonine kinase which acts as an essential component of the MAP kinase signal transduction pathway. MAPK12 is one of the four p38 MAPKs which play an important role in the cascades of cellular responses evoked by extracellular stimuli such as pro-inflammatory cytokines or physical stress leading to direct activation of transcription factors such as ELK1 and ATF2. Accordingly, p38 MAPKs phosphorylate a broad range of proteins and it has been estimated that they may have approximately 200 to 300 substrates each. Some of the targets are downstream kinases such as MAPKAPK2, which are activated through phosphorylation and further phosphorylate additional targets. Plays a role in myoblast differentiation and also in the down-regulation of cyclin D1 in response to hypoxia in adrenal cells suggesting MAPK12 may inhibit cell proliferation while promoting differentiation. Phosphorylates DLG1. Following osmotic shock, MAPK12 in the cell nucleus increases its association with nuclear DLG1, thereby causing dissociation of DLG1-SFPQ complexes. This function is independent of its catalytic activity and could affect mRNA processing and/or gene transcription to aid cell adaptation to osmolarity changes in the environment. Regulates UV-induced checkpoint signaling and repair of UV-induced DNA damage and G2 arrest after gamma-radiation exposure. MAPK12 is involved in the regulation of SLC2A1 expression and basal glucose uptake in L6 myotubes; and negatively regulates SLC2A4 expression and contraction-mediated glucose uptake in adult skeletal muscle. C-Jun (JUN) phosphorylation is stimulated by MAPK14 and inhibited by MAPK12, leading to a distinct AP-1 regulation. MAPK12 is required for the normal kinetochore localization of PLK1, prevents chromosomal instability and supports mitotic cell viability. MAPK12-signaling is also positively regulating the expansion of transient amplifying myogenic precursor cells during muscle growth and regeneration. This Mus musculus (Mouse) protein is Mitogen-activated protein kinase 12 (Mapk12).